A 156-amino-acid polypeptide reads, in one-letter code: Ribosomal RNA large subunit methyltransferase H (156 aa).

Residues Leu-73, Gly-104, and 123–128 each bind S-adenosyl-L-methionine; that span reads LSALTL.

This sequence belongs to the RNA methyltransferase RlmH family. As to quaternary structure, homodimer.

Its subcellular location is the cytoplasm. It catalyses the reaction pseudouridine(1915) in 23S rRNA + S-adenosyl-L-methionine = N(3)-methylpseudouridine(1915) in 23S rRNA + S-adenosyl-L-homocysteine + H(+). Functionally, specifically methylates the pseudouridine at position 1915 (m3Psi1915) in 23S rRNA. The protein is Ribosomal RNA large subunit methyltransferase H of Shewanella piezotolerans (strain WP3 / JCM 13877).